Here is a 655-residue protein sequence, read N- to C-terminus: A-type voltage-gated potassium channel KCND3 (655 aa).

Over 1–182 the chain is Cytoplasmic; the sequence is MAAGVAAWLP…FENPHTSTLA (182 aa). Residues 6–21 are interaction with KCNIP1 and KCNIP2; it reads AAWLPFARAAAIGWMP. The interaction with KCNIP1 stretch occupies residues 70 to 78; it reads EKEFFFNED. Zn(2+) contacts are provided by histidine 104, cysteine 110, cysteine 131, and cysteine 132. Serine 153 carries the post-translational modification Phosphoserine. Residues 183 to 204 traverse the membrane as a helical segment; that stretch reads LVFYYVTGFFIAVSVITNVVET. Residues 205–223 lie on the Extracellular side of the membrane; the sequence is VPCGTVPGSKELPCGERYS. Residues 224 to 246 traverse the membrane as a helical segment; it reads VAFFCLDTACVMIFTVEYLLRLF. Over 247-253 the chain is Cytoplasmic; it reads AAPSRYR. The helical transmembrane segment at 254 to 277 threads the bilayer; it reads FIRSVMSIIDVVAIMPYYIGLVMT. The Extracellular portion of the chain corresponds to 278-283; that stretch reads NNEDVS. The chain crosses the membrane as a helical; Voltage-sensor span at residues 284 to 306; that stretch reads GAFVTLRVFRVFRIFKFSRHSQG. The Cytoplasmic portion of the chain corresponds to 307 to 318; sequence LRILGYTLKSCA. The chain crosses the membrane as a helical span at residues 319 to 343; the sequence is SELGFLLFSLTMAIIIFATVMFYAE. The Extracellular segment spans residues 344 to 352; sequence KGSSASKFT. Residues 353-366 constitute an intramembrane region (helical); that stretch reads SIPASFWYTIVTMT. The K(+) site is built by threonine 367, leucine 368, glycine 369, and tyrosine 370. Positions 367-372 match the Selectivity filter motif; it reads TLGYGD. An intramembrane segment occupies 367 to 374; it reads TLGYGDMV. Residues 378 to 400 form a helical membrane-spanning segment; that stretch reads IAGKIFGSICSLSGVLVIALPVP. Residues 401 to 655 lie on the Cytoplasmic side of the membrane; that stretch reads VIVSNFSRIY…ASNVVKVSVL (255 aa). Threonine 459 carries the phosphothreonine modification. The interaction with KCNIP1 and KCNIP2 stretch occupies residues 470-487; that stretch reads SLIESQHHHLLHCLEKTT. The mediates dendritic targeting stretch occupies residues 472 to 487; that stretch reads IESQHHHLLHCLEKTT. Serine 569 bears the Phosphoserine; by CaMK2D mark. Serine 585 carries the post-translational modification Phosphoserine. Residues 618–644 are disordered; sequence PAPPALTPEGETRPPPASPGPNTNIPS.

The protein belongs to the potassium channel family. D (Shal) (TC 1.A.1.2) subfamily. Kv4.3/KCND3 sub-subfamily. Homotetramer. Heterotetramer with KCND2. Associates with the regulatory subunits KCNIP3 and KCNIP4. Interacts with KCNE1, KCNE2, SCN1B and KCNAB1 and DLG1. Component of heteromultimeric potassium channels. Identified in potassium channel complexes containing KCND1, KCND2, KCND3, KCNIP1, KCNIP2, KCNIP3, KCNIP4, DPP6 and DPP10. Interacts with KCNIP1; each KCNIP1 monomer interacts with two adjacent KCND3 subunits, through both the N-terminal inactivation ball of a KCND3 subunit and a C-terminal helix from the adjacent KCND3 subunit, clamping them together; this interaction stabilizes the tetrameric form and modulates the channel gating kinetics namely channel activation and inactivation kinetics and rate of recovery from inactivation. Interacts with DPP6; this interaction modulates the channel gating kinetics namely channel activation and inactivation kinetics and rate of recovery from inactivation. Interacts with KCNIP2; each KCNIP2 monomer interacts with two adjacent KCND3 subunits, through both the N-terminal inactivation ball of a KCND3 subunit and a C-terminal helix from the adjacent KCND3 subunit, clamping them together; this interaction modulates the channel gating kinetics. Post-translationally, regulated through phosphorylation at Ser-569 by CaMK2D. Detected in carotid body chemoreceptor cells and in frontal cortex.

It localises to the cell membrane. The protein localises to the sarcolemma. Its subcellular location is the cell projection. The protein resides in the dendrite. It carries out the reaction K(+)(in) = K(+)(out). Its function is as follows. Pore-forming (alpha) subunit of voltage-gated A-type potassium channels that mediates transmembrane potassium transport in excitable membranes, in brain and heart. In cardiomyocytes, may generate the transient outward potassium current I(To). In neurons, may conduct the transient subthreshold somatodendritic A-type potassium current (ISA). Kinetics properties are characterized by fast activation at subthreshold membrane potentials, rapid inactivation, and quick recovery from inactivation. Channel properties are modulated by interactions with regulatory subunits. Interaction with the regulatory subunits KCNIP1 or KCNIP2 modulates the channel gating kinetics namely channel activation and inactivation kinetics and rate of recovery from inactivation. Likewise, interaction with DPP6 modulates the channel gating kinetics namely channel activation and inactivation kinetics. The sequence is that of A-type voltage-gated potassium channel KCND3 from Oryctolagus cuniculus (Rabbit).